Here is a 1406-residue protein sequence, read N- to C-terminus: DNA-directed RNA polymerase subunit beta' (1406 aa).

Zn(2+) is bound by residues C70, C72, C85, and C88. Residues D460, D462, and D464 each coordinate Mg(2+). The Zn(2+) site is built by C814, C888, C895, and C898.

It belongs to the RNA polymerase beta' chain family. In terms of assembly, the RNAP catalytic core consists of 2 alpha, 1 beta, 1 beta' and 1 omega subunit. When a sigma factor is associated with the core the holoenzyme is formed, which can initiate transcription. The cofactor is Mg(2+). It depends on Zn(2+) as a cofactor.

It catalyses the reaction RNA(n) + a ribonucleoside 5'-triphosphate = RNA(n+1) + diphosphate. Functionally, DNA-dependent RNA polymerase catalyzes the transcription of DNA into RNA using the four ribonucleoside triphosphates as substrates. The chain is DNA-directed RNA polymerase subunit beta' from Yersinia pseudotuberculosis serotype O:1b (strain IP 31758).